A 296-amino-acid polypeptide reads, in one-letter code: Acetylglutamate kinase (296 aa).

Substrate is bound by residues 69 to 70 (GG), Arg91, and Asn193.

It belongs to the acetylglutamate kinase family. ArgB subfamily.

The protein localises to the cytoplasm. The catalysed reaction is N-acetyl-L-glutamate + ATP = N-acetyl-L-glutamyl 5-phosphate + ADP. The protein operates within amino-acid biosynthesis; L-arginine biosynthesis; N(2)-acetyl-L-ornithine from L-glutamate: step 2/4. In terms of biological role, catalyzes the ATP-dependent phosphorylation of N-acetyl-L-glutamate. The chain is Acetylglutamate kinase from Paracidovorax citrulli (strain AAC00-1) (Acidovorax citrulli).